A 227-amino-acid polypeptide reads, in one-letter code: Probable cell wall protein PGA42 (227 aa).

A signal peptide spans 1–16 (MKFIILLFALIHITVA). Asn-192 is a glycosylation site (N-linked (GlcNAc...) asparagine). Ser-200 carries the GPI-anchor amidated serine lipid modification. A propeptide spans 201-227 (GSQIFVLCVISVVGFIFFFLFFLSLFV) (removed in mature form).

Belongs to the IHD1 family. The GPI-anchor is attached to the protein in the endoplasmic reticulum and serves to target the protein to the cell surface. There, the glucosamine-inositol phospholipid moiety is cleaved off and the GPI-modified mannoprotein is covalently attached via its lipidless GPI glycan remnant to the 1,6-beta-glucan of the outer cell wall layer.

The protein localises to the secreted. It is found in the cell wall. Its subcellular location is the membrane. Probable GPI-anchored cell wall protein that may be involved in cell wall organization, hyphal growth, as well as in virulence. In Candida albicans (strain SC5314 / ATCC MYA-2876) (Yeast), this protein is Probable cell wall protein PGA42 (PGA42).